Here is a 177-residue protein sequence, read N- to C-terminus: MIVGLSNPKKEYHSTRHNVGSWYLYSLAESYLRNFKNEKKFFGFTTSLNIESNYIRLLIPNIFMNINGQSVFKMASFYNINLSEILIVHDDLELQPGISKLKYSYGHNGHNGLRDIVNTFNKNINFYRFRIGIGRPINRDQIASFVLSNPTKKEKILIQKSILHAIEKNVLSNILKF.

A tRNA-binding site is contributed by Tyr12. The active-site Proton acceptor is His17. TRNA-binding residues include Phe63, Asn65, and Asn111.

This sequence belongs to the PTH family. Monomer.

It is found in the cytoplasm. The enzyme catalyses an N-acyl-L-alpha-aminoacyl-tRNA + H2O = an N-acyl-L-amino acid + a tRNA + H(+). Hydrolyzes ribosome-free peptidyl-tRNAs (with 1 or more amino acids incorporated), which drop off the ribosome during protein synthesis, or as a result of ribosome stalling. In terms of biological role, catalyzes the release of premature peptidyl moieties from peptidyl-tRNA molecules trapped in stalled 50S ribosomal subunits, and thus maintains levels of free tRNAs and 50S ribosomes. This is Peptidyl-tRNA hydrolase from Buchnera aphidicola subsp. Acyrthosiphon pisum (strain 5A).